The primary structure comprises 375 residues: Growth/differentiation factor 8 (375 aa).

The N-terminal stretch at 1–23 (MQKIVVYVYIYLFVQISVDPVAL) is a signal peptide. The propeptide occupies 24-266 (DGSSQPTENT…VTDTPKRSRR (243 aa)). Asn-71 carries N-linked (GlcNAc...) asparagine glycosylation. 4 disulfides stabilise this stretch: Cys-272-Cys-282, Cys-281-Cys-340, Cys-309-Cys-372, and Cys-313-Cys-374.

It belongs to the TGF-beta family. In terms of assembly, homodimer; disulfide-linked.

It is found in the secreted. In terms of biological role, acts specifically as a negative regulator of skeletal muscle growth. The protein is Growth/differentiation factor 8 (MSTN) of Coturnix coturnix (Common quail).